The primary structure comprises 65 residues: MPKMKTSRAAAKRFKVTGTGKLKRNKAYKRHILTKKTTKTKRNLRKATMTDETNVKNMKKILPYM.

The protein belongs to the bacterial ribosomal protein bL35 family.

The polypeptide is Large ribosomal subunit protein bL35 (Agathobacter rectalis (strain ATCC 33656 / DSM 3377 / JCM 17463 / KCTC 5835 / VPI 0990) (Eubacterium rectale)).